The sequence spans 258 residues: Glucanase inhibitor protein 3 (258 aa).

A signal peptide spans 1 to 19 (MKIISAVAASSIALGAVSA). A Peptidase S1 domain is found at 29–256 (VLGGAVVPSG…ALEWINSITK (228 aa)). An intrachain disulfide couples Cys-56 to Cys-72. 3 N-linked (GlcNAc...) asparagine glycosylation sites follow: Asn-90, Asn-105, and Asn-110. Disulfide bonds link Cys-180-Cys-192 and Cys-202-Cys-233.

This sequence belongs to the peptidase S1 family. As to quaternary structure, forms an apoplastic complex with host endoglucanases in tomato leaves during P.infestans infection.

It localises to the secreted. In terms of biological role, secreted effector that suppresses host plant glucan elicitor-mediated defense responses. Targets host endoglucanases and inhibits the endoglucanase-mediated release of elicitor-active glucan oligosaccharides from P.infestans cell walls. This Phytophthora infestans (Potato late blight agent) protein is Glucanase inhibitor protein 3.